We begin with the raw amino-acid sequence, 221 residues long: Translation initiation factor 6 (221 aa).

This sequence belongs to the eIF-6 family.

In terms of biological role, binds to the 50S ribosomal subunit and prevents its association with the 30S ribosomal subunit to form the 70S initiation complex. In Methanosphaerula palustris (strain ATCC BAA-1556 / DSM 19958 / E1-9c), this protein is Translation initiation factor 6.